Reading from the N-terminus, the 157-residue chain is 2-C-methyl-D-erythritol 2,4-cyclodiphosphate synthase (157 aa).

A divalent metal cation contacts are provided by aspartate 8 and histidine 10. Residues 8–10 (DVH) and 34–35 (HS) contribute to the 4-CDP-2-C-methyl-D-erythritol 2-phosphate site. Histidine 42 is a binding site for a divalent metal cation. 4-CDP-2-C-methyl-D-erythritol 2-phosphate contacts are provided by residues 56–58 (DIG), 61–65 (FPDTD), 100–106 (AQAPKML), 132–135 (TTTE), phenylalanine 139, and arginine 142.

This sequence belongs to the IspF family. Homotrimer. A divalent metal cation is required as a cofactor.

The enzyme catalyses 4-CDP-2-C-methyl-D-erythritol 2-phosphate = 2-C-methyl-D-erythritol 2,4-cyclic diphosphate + CMP. It participates in isoprenoid biosynthesis; isopentenyl diphosphate biosynthesis via DXP pathway; isopentenyl diphosphate from 1-deoxy-D-xylulose 5-phosphate: step 4/6. In terms of biological role, involved in the biosynthesis of isopentenyl diphosphate (IPP) and dimethylallyl diphosphate (DMAPP), two major building blocks of isoprenoid compounds. Catalyzes the conversion of 4-diphosphocytidyl-2-C-methyl-D-erythritol 2-phosphate (CDP-ME2P) to 2-C-methyl-D-erythritol 2,4-cyclodiphosphate (ME-CPP) with a corresponding release of cytidine 5-monophosphate (CMP). In Erwinia tasmaniensis (strain DSM 17950 / CFBP 7177 / CIP 109463 / NCPPB 4357 / Et1/99), this protein is 2-C-methyl-D-erythritol 2,4-cyclodiphosphate synthase.